The chain runs to 750 residues: Photosystem I P700 chlorophyll a apoprotein A1 (750 aa).

Transmembrane regions (helical) follow at residues 70-93, 156-179, 195-219, 291-309, 346-369, 385-411, 433-455, and 531-549; these read VFSA…FHGA, LYCT…FHYH, LNHH…HVSL, IAHH…GHMY, WHAQ…HHMY, LSLF…IFMV, AIIS…LYIH, and FLVH…LILL. [4Fe-4S] cluster-binding residues include Cys-573 and Cys-582. Transmembrane regions (helical) follow at residues 589–610 and 664–686; these read HVFL…HFSW and LSAY…MFLF. Residue His-675 coordinates chlorophyll a'. Residues Met-683 and Tyr-691 each coordinate chlorophyll a. Position 692 (Trp-692) interacts with phylloquinone. The chain crosses the membrane as a helical span at residues 724–744; the sequence is AVGVTHYLLGGIATTWAFFLA.

This sequence belongs to the PsaA/PsaB family. As to quaternary structure, the PsaA/B heterodimer binds the P700 chlorophyll special pair and subsequent electron acceptors. PSI consists of a core antenna complex that captures photons, and an electron transfer chain that converts photonic excitation into a charge separation. The eukaryotic PSI reaction center is composed of at least 11 subunits. The cofactor is P700 is a chlorophyll a/chlorophyll a' dimer, A0 is one or more chlorophyll a, A1 is one or both phylloquinones and FX is a shared 4Fe-4S iron-sulfur center..

Its subcellular location is the plastid. It is found in the chloroplast thylakoid membrane. It catalyses the reaction reduced [plastocyanin] + hnu + oxidized [2Fe-2S]-[ferredoxin] = oxidized [plastocyanin] + reduced [2Fe-2S]-[ferredoxin]. In terms of biological role, psaA and PsaB bind P700, the primary electron donor of photosystem I (PSI), as well as the electron acceptors A0, A1 and FX. PSI is a plastocyanin-ferredoxin oxidoreductase, converting photonic excitation into a charge separation, which transfers an electron from the donor P700 chlorophyll pair to the spectroscopically characterized acceptors A0, A1, FX, FA and FB in turn. Oxidized P700 is reduced on the lumenal side of the thylakoid membrane by plastocyanin. This is Photosystem I P700 chlorophyll a apoprotein A1 from Coffea arabica (Arabian coffee).